A 243-amino-acid polypeptide reads, in one-letter code: NAD-dependent protein deacetylase (243 aa).

The 243-residue stretch at 1–243 (MKHDLETLKH…VSVVKSLMTE (243 aa)) folds into the Deacetylase sirtuin-type domain. The NAD(+) site is built by alanine 24, phenylalanine 35, arginine 36, glutamine 105, isoleucine 107, aspartate 108, and histidine 123. Phenylalanine 35 serves as a coordination point for nicotinamide. Isoleucine 107 and aspartate 108 together coordinate nicotinamide. Histidine 123 serves as the catalytic Proton acceptor. The Zn(2+) site is built by cysteine 131, cysteine 134, cysteine 151, and cysteine 154. Positions 192, 193, 215, and 232 each coordinate NAD(+).

This sequence belongs to the sirtuin family. Class U subfamily. The cofactor is Zn(2+).

Its subcellular location is the cytoplasm. It catalyses the reaction N(6)-acetyl-L-lysyl-[protein] + NAD(+) + H2O = 2''-O-acetyl-ADP-D-ribose + nicotinamide + L-lysyl-[protein]. In terms of biological role, NAD-dependent protein deacetylase which modulates the activities of several enzymes which are inactive in their acetylated form. The polypeptide is NAD-dependent protein deacetylase (Staphylococcus aureus (strain MRSA252)).